Consider the following 295-residue polypeptide: Trimeric intracellular cation channel type 1B.1 (295 aa).

Residues Met-1–Tyr-27 lie on the Lumenal side of the membrane. Residues Pro-28–Asp-45 form a helical membrane-spanning segment. At Leu-46 to Lys-56 the chain is on the cytoplasmic side. The chain crosses the membrane as a discontinuously helical span at residues His-57–Leu-80. The Lumenal segment spans residues Gly-81–Lys-89. The helical transmembrane segment at Arg-90–Ala-107 threads the bilayer. The Cytoplasmic portion of the chain corresponds to Pro-108–Thr-119. A helical membrane pass occupies residues Pro-120–Tyr-148. A 1,2-diacyl-sn-glycero-3-phospho-(1D-myo-inositol-4,5-bisphosphate)-binding residues include Lys-129 and Arg-133. Over Pro-149–Asn-150 the chain is Lumenal. Residues Ser-151–Arg-177 form a discontinuously helical membrane-spanning segment. Ser-166 lines the a 1,2-diacyl-sn-glycero-3-phospho-(1D-myo-inositol-4,5-bisphosphate) pocket. Topologically, residues Gly-178–Leu-188 are cytoplasmic. Residues Arg-189–Gly-210 traverse the membrane as a helical segment. The Lumenal portion of the chain corresponds to Thr-211–Ala-215. A helical transmembrane segment spans residues Pro-216 to His-239. At Val-240–Gln-295 the chain is on the cytoplasmic side. Positions Arg-274–Gln-295 are disordered.

Belongs to the TMEM38 family. As to quaternary structure, homotrimer; trimerization probably requires binding to phosphatidylinositol 4,5-bisphosphate (PIP2).

It is found in the endoplasmic reticulum membrane. Functionally, potassium channel that mediates transmembrane potassium transport. Might be required for maintenance of rapid intracellular calcium release. May act as a counter-ion channel that functions in synchronization with calcium release from intracellular stores. Binds phosphatidylinositol 4,5-bisphosphate (PIP2). The protein is Trimeric intracellular cation channel type 1B.1 of Caenorhabditis elegans.